The following is a 113-amino-acid chain: Thioredoxin H-type (113 aa).

Residues 2–112 (GGSVIVIDSK…LKALVAKHAA (111 aa)) enclose the Thioredoxin domain. Active-site nucleophile residues include C37 and C40. C37 and C40 are oxidised to a cystine.

This sequence belongs to the thioredoxin family. Plant H-type subfamily.

The protein localises to the cytoplasm. Participates in various redox reactions through the reversible oxidation of the active center dithiol to a disulfide. The H form is known to activate a number of cytosolic enzymes. This chain is Thioredoxin H-type (TRXH), found in Chlamydomonas reinhardtii (Chlamydomonas smithii).